We begin with the raw amino-acid sequence, 310 residues long: Cytosolic Fe-S cluster assembly factor NUBP1 homolog (310 aa).

Residues Cys12, Cys26, Cys29, and Cys35 each coordinate [4Fe-4S] cluster. Residue 66 to 73 participates in ATP binding; that stretch reads GKGGVGKS. The [4Fe-4S] cluster site is built by Cys240 and Cys243.

This sequence belongs to the Mrp/NBP35 ATP-binding proteins family. NUBP1/NBP35 subfamily. In terms of assembly, heterotetramer of 2 NUBP1 and 2 NUBP2 chains. [4Fe-4S] cluster serves as cofactor.

Its subcellular location is the cytoplasm. In terms of biological role, component of the cytosolic iron-sulfur (Fe/S) protein assembly (CIA) machinery. Required for maturation of extramitochondrial Fe-S proteins. The NUBP1-NUBP2 heterotetramer forms a Fe-S scaffold complex, mediating the de novo assembly of an Fe-S cluster and its transfer to target apoproteins. The chain is Cytosolic Fe-S cluster assembly factor NUBP1 homolog from Brugia malayi (Filarial nematode worm).